The following is a 151-amino-acid chain: SsrA-binding protein (151 aa).

Belongs to the SmpB family.

It is found in the cytoplasm. In terms of biological role, required for rescue of stalled ribosomes mediated by trans-translation. Binds to transfer-messenger RNA (tmRNA), required for stable association of tmRNA with ribosomes. tmRNA and SmpB together mimic tRNA shape, replacing the anticodon stem-loop with SmpB. tmRNA is encoded by the ssrA gene; the 2 termini fold to resemble tRNA(Ala) and it encodes a 'tag peptide', a short internal open reading frame. During trans-translation Ala-aminoacylated tmRNA acts like a tRNA, entering the A-site of stalled ribosomes, displacing the stalled mRNA. The ribosome then switches to translate the ORF on the tmRNA; the nascent peptide is terminated with the 'tag peptide' encoded by the tmRNA and targeted for degradation. The ribosome is freed to recommence translation, which seems to be the essential function of trans-translation. This Lactobacillus acidophilus (strain ATCC 700396 / NCK56 / N2 / NCFM) protein is SsrA-binding protein.